The chain runs to 100 residues: Large ribosomal subunit protein uL23 (100 aa).

This sequence belongs to the universal ribosomal protein uL23 family. As to quaternary structure, part of the 50S ribosomal subunit. Contacts protein L29, and trigger factor when it is bound to the ribosome.

Its function is as follows. One of the early assembly proteins it binds 23S rRNA. One of the proteins that surrounds the polypeptide exit tunnel on the outside of the ribosome. Forms the main docking site for trigger factor binding to the ribosome. This Shewanella oneidensis (strain ATCC 700550 / JCM 31522 / CIP 106686 / LMG 19005 / NCIMB 14063 / MR-1) protein is Large ribosomal subunit protein uL23.